We begin with the raw amino-acid sequence, 155 residues long: Small ribosomal subunit protein uS7 (155 aa).

The protein belongs to the universal ribosomal protein uS7 family. Part of the 30S ribosomal subunit. Contacts proteins S9 and S11.

One of the primary rRNA binding proteins, it binds directly to 16S rRNA where it nucleates assembly of the head domain of the 30S subunit. Is located at the subunit interface close to the decoding center, probably blocks exit of the E-site tRNA. This chain is Small ribosomal subunit protein uS7, found in Chlorobium limicola (strain DSM 245 / NBRC 103803 / 6330).